Reading from the N-terminus, the 137-residue chain is Small ribosomal subunit protein uS12 (137 aa).

The disordered stretch occupies residues 1–55 (MPTINQLVRKPRQSKSKKSDSPALNRNFNSKKKKFTDLNSPQKRGVCTRVGTMTP). Asp-102 is subject to 3-methylthioaspartic acid. The segment at 118–137 (SGVDGRRQGRSLYGTKKPKK) is disordered.

Belongs to the universal ribosomal protein uS12 family. Part of the 30S ribosomal subunit. Contacts proteins S8 and S17. May interact with IF1 in the 30S initiation complex.

Functionally, with S4 and S5 plays an important role in translational accuracy. Its function is as follows. Interacts with and stabilizes bases of the 16S rRNA that are involved in tRNA selection in the A site and with the mRNA backbone. Located at the interface of the 30S and 50S subunits, it traverses the body of the 30S subunit contacting proteins on the other side and probably holding the rRNA structure together. The combined cluster of proteins S8, S12 and S17 appears to hold together the shoulder and platform of the 30S subunit. This chain is Small ribosomal subunit protein uS12, found in Staphylococcus saprophyticus subsp. saprophyticus (strain ATCC 15305 / DSM 20229 / NCIMB 8711 / NCTC 7292 / S-41).